The chain runs to 44 residues: pyr operon leader peptide (44 aa).

This Shigella flexneri protein is pyr operon leader peptide (pyrL).